Consider the following 219-residue polypeptide: 2-hydroxy-3-keto-5-methylthiopentenyl-1-phosphate phosphatase (219 aa).

This sequence belongs to the HAD-like hydrolase superfamily. MtnX family.

It catalyses the reaction 2-hydroxy-5-methylsulfanyl-3-oxopent-1-enyl phosphate + H2O = 1,2-dihydroxy-5-(methylsulfanyl)pent-1-en-3-one + phosphate. It functions in the pathway amino-acid biosynthesis; L-methionine biosynthesis via salvage pathway; L-methionine from S-methyl-5-thio-alpha-D-ribose 1-phosphate: step 4/6. In terms of biological role, dephosphorylates 2-hydroxy-3-keto-5-methylthiopentenyl-1-phosphate (HK-MTPenyl-1-P) yielding 1,2-dihydroxy-3-keto-5-methylthiopentene (DHK-MTPene). The chain is 2-hydroxy-3-keto-5-methylthiopentenyl-1-phosphate phosphatase from Bacillus cereus (strain ATCC 10987 / NRS 248).